The chain runs to 271 residues: Histone chaperone asf-1 (271 aa).

Residues 152–271 (KWDSEASAPP…PKQQGMAMAQ (120 aa)) are disordered. 2 stretches are compositionally biased toward acidic residues: residues 168 to 185 (PEAD…DELA) and 211 to 258 (IEED…EMEI).

This sequence belongs to the ASF1 family. As to quaternary structure, interacts with histone H3 and histone H4.

It is found in the nucleus. Histone chaperone that facilitates histone deposition and histone exchange and removal during nucleosome assembly and disassembly. The protein is Histone chaperone asf-1 (asf-1) of Neurospora crassa (strain ATCC 24698 / 74-OR23-1A / CBS 708.71 / DSM 1257 / FGSC 987).